A 428-amino-acid chain; its full sequence is Adenylosuccinate synthetase (428 aa).

GTP is bound by residues 11-17 (GDEGKGK) and 39-41 (GHT). D12 acts as the Proton acceptor in catalysis. Mg(2+)-binding residues include D12 and G39. IMP is bound by residues 12 to 15 (DEGK), 37 to 40 (NAGH), T130, R144, N226, T241, and R305. H40 serves as the catalytic Proton donor. 301–307 (VTTGRKR) is a binding site for substrate. GTP-binding positions include R307, 333 to 335 (KLD), and 415 to 417 (GTG).

It belongs to the adenylosuccinate synthetase family. In terms of assembly, homodimer. Mg(2+) serves as cofactor.

It localises to the cytoplasm. It catalyses the reaction IMP + L-aspartate + GTP = N(6)-(1,2-dicarboxyethyl)-AMP + GDP + phosphate + 2 H(+). It functions in the pathway purine metabolism; AMP biosynthesis via de novo pathway; AMP from IMP: step 1/2. Functionally, plays an important role in the de novo pathway and in the salvage pathway of purine nucleotide biosynthesis. Catalyzes the first committed step in the biosynthesis of AMP from IMP. The chain is Adenylosuccinate synthetase from Lodderomyces elongisporus (strain ATCC 11503 / CBS 2605 / JCM 1781 / NBRC 1676 / NRRL YB-4239) (Yeast).